Reading from the N-terminus, the 252-residue chain is MNKFEDIRGVAFDLDGTLVDSALGLAAAVDMALYALKLPIAGEERVITWIGNGADVLMERALTWARQERATLRKTMGKPPVDDDIPAEEQVRILRKLFDRYYGEVAEEGTFLFPHVADTLGALQAKGLPLGLVTNKPTPFVAPLLEALDIAKYFSVVIGGDDVQNKKPHPDPLLLVAERMGIAPQQMLFVGDSRNDIQAAKAAGCPSVGLTYGYNYGEAIDLSQPDVIYQSINDLLPALGLPHSENQESKND.

The Nucleophile role is filled by Asp-13. The Mg(2+) site is built by Asp-13, Asp-15, and Asp-192.

The protein belongs to the HAD-like hydrolase superfamily. CbbY/CbbZ/Gph/YieH family. In terms of assembly, monomer. The cofactor is Mg(2+). Chloride serves as cofactor.

The catalysed reaction is 2-phosphoglycolate + H2O = glycolate + phosphate. The protein operates within organic acid metabolism; glycolate biosynthesis; glycolate from 2-phosphoglycolate: step 1/1. Its function is as follows. Specifically catalyzes the dephosphorylation of 2-phosphoglycolate. Is involved in the dissimilation of the intracellular 2-phosphoglycolate formed during the DNA repair of 3'-phosphoglycolate ends, a major class of DNA lesions induced by oxidative stress. This is Phosphoglycolate phosphatase from Shigella dysenteriae serotype 1 (strain Sd197).